Here is a 651-residue protein sequence, read N- to C-terminus: Acetyl-coenzyme A synthetase (651 aa).

Residues 193–196 (RAGR), Thr-313, and Asn-337 each bind CoA. ATP is bound by residues 389-391 (GEP), 413-418 (DTWWQT), Asp-502, and Arg-517. Residue Ser-525 participates in CoA binding. Arg-528 is an ATP binding site. Residues Val-539, His-541, and Val-544 each coordinate Mg(2+). A CoA-binding site is contributed by Arg-586. Lys-611 carries the N6-acetyllysine modification.

The protein belongs to the ATP-dependent AMP-binding enzyme family. Mg(2+) is required as a cofactor. Post-translationally, acetylated. Deacetylation by the SIR2-homolog deacetylase activates the enzyme.

The catalysed reaction is acetate + ATP + CoA = acetyl-CoA + AMP + diphosphate. Functionally, catalyzes the conversion of acetate into acetyl-CoA (AcCoA), an essential intermediate at the junction of anabolic and catabolic pathways. AcsA undergoes a two-step reaction. In the first half reaction, AcsA combines acetate with ATP to form acetyl-adenylate (AcAMP) intermediate. In the second half reaction, it can then transfer the acetyl group from AcAMP to the sulfhydryl group of CoA, forming the product AcCoA. This Shewanella denitrificans (strain OS217 / ATCC BAA-1090 / DSM 15013) protein is Acetyl-coenzyme A synthetase.